The chain runs to 248 residues: Coproheme decarboxylase (248 aa).

Fe-coproporphyrin III is bound by residues Arg130, 144 to 148 (YPMDK), His171, Gln184, and Ser222. The active site involves Tyr144.

Belongs to the ChdC family. Type 1 subfamily. Homopentamer. Fe-coproporphyrin III is required as a cofactor.

It carries out the reaction Fe-coproporphyrin III + 2 H2O2 + 2 H(+) = heme b + 2 CO2 + 4 H2O. The enzyme catalyses Fe-coproporphyrin III + H2O2 + H(+) = harderoheme III + CO2 + 2 H2O. It catalyses the reaction harderoheme III + H2O2 + H(+) = heme b + CO2 + 2 H2O. It functions in the pathway porphyrin-containing compound metabolism; protoheme biosynthesis. Its function is as follows. Involved in coproporphyrin-dependent heme b biosynthesis. Catalyzes the decarboxylation of Fe-coproporphyrin III (coproheme) to heme b (protoheme IX), the last step of the pathway. The reaction occurs in a stepwise manner with a three-propionate intermediate. In Geobacillus kaustophilus (strain HTA426), this protein is Coproheme decarboxylase.